A 136-amino-acid polypeptide reads, in one-letter code: Large ribosomal subunit protein bL17 (136 aa).

It belongs to the bacterial ribosomal protein bL17 family. As to quaternary structure, part of the 50S ribosomal subunit. Contacts protein L32.

In Rickettsia africae (strain ESF-5), this protein is Large ribosomal subunit protein bL17.